Reading from the N-terminus, the 469-residue chain is Arginine biosynthesis bifunctional protein ArgJ, chloroplastic (469 aa).

Thr213, Lys239, Thr250, Glu337, Asn464, and Thr469 together coordinate substrate. The active-site Nucleophile is the Thr250.

Belongs to the ArgJ family. Heterodimer of an alpha and a beta chain.

It is found in the plastid. The protein resides in the chloroplast. It catalyses the reaction N(2)-acetyl-L-ornithine + L-glutamate = N-acetyl-L-glutamate + L-ornithine. It carries out the reaction L-glutamate + acetyl-CoA = N-acetyl-L-glutamate + CoA + H(+). The protein operates within amino-acid biosynthesis; L-arginine biosynthesis; L-ornithine and N-acetyl-L-glutamate from L-glutamate and N(2)-acetyl-L-ornithine (cyclic): step 1/1. Its pathway is amino-acid biosynthesis; L-arginine biosynthesis; N(2)-acetyl-L-ornithine from L-glutamate: step 1/4. Functionally, catalyzes two activities which are involved in the cyclic version of arginine biosynthesis: the synthesis of acetylglutamate from glutamate and acetyl-CoA, and of ornithine by transacetylation between acetylornithine and glutamate. The sequence is that of Arginine biosynthesis bifunctional protein ArgJ, chloroplastic from Ricinus communis (Castor bean).